Consider the following 320-residue polypeptide: Malate dehydrogenase (320 aa).

NAD(+)-binding positions include 10 to 15 (GSGMIG) and Asp34. Positions 83 and 89 each coordinate substrate. Residues Asn96 and 119–121 (ITN) each bind NAD(+). The substrate site is built by Asn121 and Arg152. Residue His176 is the Proton acceptor of the active site.

This sequence belongs to the LDH/MDH superfamily. MDH type 3 family.

The catalysed reaction is (S)-malate + NAD(+) = oxaloacetate + NADH + H(+). Functionally, catalyzes the reversible oxidation of malate to oxaloacetate. The chain is Malate dehydrogenase from Bartonella henselae (strain ATCC 49882 / DSM 28221 / CCUG 30454 / Houston 1) (Rochalimaea henselae).